Reading from the N-terminus, the 371-residue chain is GDSL esterase/lipase At3g27950 (371 aa).

An N-terminal signal peptide occupies residues 1–23 (MAISKITLAIIVLLLGFTEKLSA). Residue S39 is the Nucleophile of the active site. 5 N-linked (GlcNAc...) asparagine glycosylation sites follow: N82, N143, N178, N194, and N315. Active-site residues include D334 and H337.

It belongs to the 'GDSL' lipolytic enzyme family.

Its subcellular location is the secreted. The polypeptide is GDSL esterase/lipase At3g27950 (Arabidopsis thaliana (Mouse-ear cress)).